Consider the following 179-residue polypeptide: ATP-dependent protease subunit HslV (179 aa).

The active site involves Thr7. Na(+)-binding residues include Gly162, Cys165, and Thr168.

It belongs to the peptidase T1B family. HslV subfamily. As to quaternary structure, a double ring-shaped homohexamer of HslV is capped on each side by a ring-shaped HslU homohexamer. The assembly of the HslU/HslV complex is dependent on binding of ATP.

It is found in the cytoplasm. It carries out the reaction ATP-dependent cleavage of peptide bonds with broad specificity.. Allosterically activated by HslU binding. In terms of biological role, protease subunit of a proteasome-like degradation complex believed to be a general protein degrading machinery. This chain is ATP-dependent protease subunit HslV, found in Bordetella bronchiseptica (strain ATCC BAA-588 / NCTC 13252 / RB50) (Alcaligenes bronchisepticus).